The primary structure comprises 485 residues: uncharacterized protein (485 aa).

At 1–30 (MFSWANIGSNEYLPLKNDRKAYLNQWAKRS) the chain is on the cytoplasmic side. The helical transmembrane segment at 31 to 51 (GLAIAAICILGILILAIVKLF) threads the bilayer. Topologically, residues 52 to 485 (CFKAIIFPIV…DIEQAYSKLI (434 aa)) are extracellular. N-linked (GlcNAc...) asparagine glycosylation is present at asparagine 67. The phosphodiesterase stretch occupies residues 74–404 (STVIVISLDG…YEPLGVHGYD (331 aa)). Catalysis depends on threonine 118, which acts as the Nucleophile. Residues asparagine 306, asparagine 338, asparagine 453, and asparagine 467 are each glycosylated (N-linked (GlcNAc...) asparagine).

This sequence belongs to the nucleotide pyrophosphatase/phosphodiesterase family.

Its subcellular location is the membrane. This is an uncharacterized protein from Schizosaccharomyces pombe (strain 972 / ATCC 24843) (Fission yeast).